The chain runs to 149 residues: Ribonuclease VapC2 (149 aa).

The region spanning 11–149 is the PINc domain; that stretch reads IFFDSNILIY…RVDFLEIIEI (139 aa). Residues Asp14 and Asp116 each contribute to the Mg(2+) site.

The protein belongs to the PINc/VapC protein family. Mg(2+) is required as a cofactor.

Toxic component of a type II toxin-antitoxin (TA) system. An RNase. Its cognate antitoxin is VapB2. The sequence is that of Ribonuclease VapC2 from Methanocaldococcus jannaschii (strain ATCC 43067 / DSM 2661 / JAL-1 / JCM 10045 / NBRC 100440) (Methanococcus jannaschii).